The following is a 120-amino-acid chain: Large ribosomal subunit protein uL18 (120 aa).

This sequence belongs to the universal ribosomal protein uL18 family. In terms of assembly, part of the 50S ribosomal subunit; part of the 5S rRNA/L5/L18/L25 subcomplex. Contacts the 5S and 23S rRNAs.

This is one of the proteins that bind and probably mediate the attachment of the 5S RNA into the large ribosomal subunit, where it forms part of the central protuberance. In Bartonella bacilliformis (strain ATCC 35685 / KC583 / Herrer 020/F12,63), this protein is Large ribosomal subunit protein uL18.